Here is a 486-residue protein sequence, read N- to C-terminus: Cardiolipin synthase A (486 aa).

Transmembrane regions (helical) follow at residues 3-23 (TFYT…IAGV) and 38-58 (MAWL…YLSF). PLD phosphodiesterase domains are found at residues 219-246 (MDLR…VDPR) and 399-426 (EGGL…DMRS). Active-site residues include His-224, Lys-226, Asp-231, His-404, Lys-406, and Asp-411.

This sequence belongs to the phospholipase D family. Cardiolipin synthase subfamily. ClsA sub-subfamily.

It is found in the cell inner membrane. It carries out the reaction 2 a 1,2-diacyl-sn-glycero-3-phospho-(1'-sn-glycerol) = a cardiolipin + glycerol. Its function is as follows. Catalyzes the reversible phosphatidyl group transfer from one phosphatidylglycerol molecule to another to form cardiolipin (CL) (diphosphatidylglycerol) and glycerol. The polypeptide is Cardiolipin synthase A (Escherichia fergusonii (strain ATCC 35469 / DSM 13698 / CCUG 18766 / IAM 14443 / JCM 21226 / LMG 7866 / NBRC 102419 / NCTC 12128 / CDC 0568-73)).